We begin with the raw amino-acid sequence, 30 residues long: Hementerin (30 aa).

Requires Ca(2+) as cofactor.

The protein localises to the secreted. Fibrino(geno)lytic activity inhibited by EDTA but not by PMSF, E-64, 6-AHA and aprotinin. Cleaves fibrinogen Aalpha (FGA), gamma (FGG) and Bbeta (FGB) chains. Degrades cross-linked fibrin. Has no amidolytic, plasminogenolytic or caseinolytic activity. Inhibits platelet aggregation induced by collagen (IC(50)=7.5ug/ml) and various other agonists, presumably via activation of a nitridergic pathway. Inhibition is accompanied by reduced ATP release from and surface expression of SELP and CD63 on platelets as well as increased intracellular levels of Ca(2+), cGMP and nitric oxide synthase activity. This Haementeria depressa (Leech) protein is Hementerin.